The primary structure comprises 1140 residues: MVISLNSCLSFICLLLCHWIGTASPLNLEDPNVCSHWESYSVTVQESYPHPFDQIYYTSCTDILNWFKCTRHRVSYRTAYRHGEKTMYRRKSQCCPGFYESGEMCVPHCADKCVHGRCIAPNTCQCEPGWGGTNCSSACDGDHWGPHCTSRCQCKNGALCNPITGACHCAAGFRGWRCEDRCEQGTYGNDCHQRCQCQNGATCDHVTGECRCPPGYTGAFCEDLCPPGKHGPQCEQRCPCQNGGVCHHVTGECSCPSGWMGTVCGQPCPEGRFGKNCSQECQCHNGGTCDAATGQCHCSPGYTGERCQDECPVGTYGVLCAETCQCVNGGKCYHVSGACLCEAGFAGERCEARLCPEGLYGIKCDKRCPCHLENTHSCHPMSGECACKPGWSGLYCNETCSPGFYGEACQQICSCQNGADCDSVTGKCTCAPGFKGIDCSTPCPLGTYGINCSSRCGCKNDAVCSPVDGSCTCKAGWHGVDCSIRCPSGTWGFGCNLTCQCLNGGACNTLDGTCTCAPGWRGEKCELPCQDGTYGLNCAERCDCSHADGCHPTTGHCRCLPGWSGVHCDSVCAEGRWGPNCSLPCYCKNGASCSPDDGICECAPGFRGTTCQRICSPGFYGHRCSQTCPQCVHSSGPCHHITGLCDCLPGFTGALCNEVCPSGRFGKNCAGICTCTNNGTCNPIDRSCQCYPGWIGSDCSQPCPPAHWGPNCIHTCNCHNGAFCSAYDGECKCTPGWTGLYCTQRCPLGFYGKDCALICQCQNGADCDHISGQCTCRTGFMGRHCEQKCPSGTYGYGCRQICDCLNNSTCDHITGTCYCSPGWKGARCDQAGVIIVGNLNSLSRTSTALPADSYQIGAIAGIIILVLVVLFLLALFIIYRHKQKGKESSMPAVTYTPAMRVVNADYTISGTLPHSNGGNANSHYFTNPSYHTLTQCATSPHVNNRDRMTVTKSKNNQLFVNLKNVNPGKRGPVGDCTGTLPADWKHGGYLNELGAFGLDRSYMGKSLKDLGKNSEYNSSNCSLSSSENPYATIKDPPVLIPKSSECGYVEMKSPARRDSPYAEINNSTSANRNVYEVEPTVSVVQGVFSNNGRLSQDPYDLPKNSHIPCHYDLLPVRDSSSSPKQEDSGGSSSNSSSSSE.

The N-terminal stretch at 1-25 (MVISLNSCLSFICLLLCHWIGTASP) is a signal peptide. Residues 1–857 (MVISLNSCLS…ALPADSYQIG (857 aa)) are necessary for interaction with AP2M1, self-assembly and formation of the irregular, mosaic-like adhesion pattern. Topologically, residues 26-857 (LNLEDPNVCS…ALPADSYQIG (832 aa)) are extracellular. The region spanning 30–107 (DPNVCSHWES…FYESGEMCVP (78 aa)) is the EMI domain. Cystine bridges form between C34–C95, C60–C69, C94–C105, C109–C118, C113–C124, C126–C135, C148–C160, C154–C167, C169–C178, C191–C203, C197–C210, C212–C221, C234–C246, C240–C253, C255–C264, C281–C289, C283–C296, C298–C307, C320–C332, C326–C339, C341–C350, C409–C421, C415–C428, C430–C439, C456–C464, C458–C471, C473–C482, C495–C507, C501–C514, C516–C525, C542–C550, C544–C557, C559–C568, C581–C593, C587–C600, C602–C611, C669–C681, C675–C688, C690–C699, C716–C724, C718–C731, C733–C742, C755–C767, C761–C774, C776–C785, C802–C810, C804–C817, and C819–C828. 15 consecutive EGF-like domains span residues 106–136 (VPHCADKCVHGRCIAPNTCQCEPGWGGTNCS), 144–179 (WGPHCTSRCQCKNGALCNPITGACHCAAGFRGWRCE), 187–222 (YGNDCHQRCQCQNGATCDHVTGECRCPPGYTGAFCE), 230–265 (HGPQCEQRCPCQNGGVCHHVTGECSCPSGWMGTVCG), 278–308 (SQECQCHNGGTCDAATGQCHCSPGYTGERCQ), 316–351 (YGVLCAETCQCVNGGKCYHVSGACLCEAGFAGERCE), 405–440 (YGEACQQICSCQNGADCDSVTGKCTCAPGFKGIDCS), 453–483 (SSRCGCKNDAVCSPVDGSCTCKAGWHGVDCS), 491–526 (WGFGCNLTCQCLNGGACNTLDGTCTCAPGWRGEKCE), 539–569 (AERCDCSHADGCHPTTGHCRCLPGWSGVHCD), 577–612 (WGPNCSLPCYCKNGASCSPDDGICECAPGFRGTTCQ), 665–700 (FGKNCAGICTCTNNGTCNPIDRSCQCYPGWIGSDCS), 713–743 (IHTCNCHNGAFCSAYDGECKCTPGWTGLYCT), 751–786 (YGKDCALICQCQNGADCDHISGQCTCRTGFMGRHCE), and 799–829 (RQICDCLNNSTCDHITGTCYCSPGWKGARCD). Residue N134 is glycosylated (N-linked (GlcNAc...) asparagine). N496 carries N-linked (GlcNAc...) asparagine glycosylation. A helical membrane pass occupies residues 858 to 878 (AIAGIIILVLVVLFLLALFII). Topologically, residues 879 to 1140 (YRHKQKGKES…SSSNSSSSSE (262 aa)) are cytoplasmic. The necessary for formation of large intracellular vacuoles stretch occupies residues 945–1140 (RDRMTVTKSK…SSSNSSSSSE (196 aa)). Y1030 is modified (phosphotyrosine; by SRC). Positions 1111-1140 (YDLLPVRDSSSSPKQEDSGGSSSNSSSSSE) are disordered. Positions 1128–1140 (SGGSSSNSSSSSE) are enriched in low complexity.

The protein belongs to the MEGF family. Homomer. Interacts with GULP1 and ABCA1. Interacts with AP2M1. Does not interact with MEGF11. Binds with high affinity to complement C1q. Interacts (via the cytoplasmic domain) with NOTCH1 (via NICD domain). Phosphorylated on tyrosine residues. Phosphorylation at Tyr-1030 may be important for muscle cell proliferation. Post-translationally, ubiquitinated; mono- and polyubiquitinated forms are detected. In terms of tissue distribution, expressed in muscle (at protein level).

It localises to the cell membrane. The protein localises to the cell projection. Its subcellular location is the phagocytic cup. Its function is as follows. Membrane receptor involved in phagocytosis by macrophages and astrocytes of apoptotic cells. Receptor for C1q, an eat-me signal, that binds phosphatidylserine expressed on the surface of apoptotic cells. Cooperates with ABCA1 within the process of engulfment. Promotes the formation of large intracellular vacuoles and may be responsible for the uptake of amyloid-beta peptides. Necessary for astrocyte-dependent apoptotic neuron clearance in the developing cerebellum. Plays role in muscle cell proliferation, adhesion and motility. Is also an essential factor in the regulation of myogenesis. Controls the balance between skeletal muscle satellite cells proliferation and differentiation through regulation of the notch signaling pathway. May also function in the mosaic spacing of specific neuron subtypes in the retina through homotypic retinal neuron repulsion. Mosaics provide a mechanism to distribute each cell type evenly across the retina, ensuring that all parts of the visual field have access to a full set of processing elements. This is Multiple epidermal growth factor-like domains protein 10 from Homo sapiens (Human).